Reading from the N-terminus, the 300-residue chain is Tyrosine recombinase XerC (300 aa).

Positions 2–88 (IQEGKLEQQF…SLRSFYTFLL (87 aa)) constitute a Core-binding (CB) domain. One can recognise a Tyr recombinase domain in the interval 109-294 (RLPKFFYSEE…TKEHLKSTYM (186 aa)). Catalysis depends on residues Arg150, Lys174, His246, Arg249, and His272. The O-(3'-phospho-DNA)-tyrosine intermediate role is filled by Tyr281.

Belongs to the 'phage' integrase family. XerC subfamily. Forms a cyclic heterotetrameric complex composed of two molecules of XerC and two molecules of XerD.

The protein localises to the cytoplasm. In terms of biological role, site-specific tyrosine recombinase, which acts by catalyzing the cutting and rejoining of the recombining DNA molecules. The XerC-XerD complex is essential to convert dimers of the bacterial chromosome into monomers to permit their segregation at cell division. It also contributes to the segregational stability of plasmids. The sequence is that of Tyrosine recombinase XerC from Listeria monocytogenes serovar 1/2a (strain ATCC BAA-679 / EGD-e).